The following is a 324-amino-acid chain: Endochitinase B (324 aa).

The signal sequence occupies residues 1–23; it reads MRLREFTALSSLLFSLLLLSASA. The Chitin-binding type-1 domain maps to 24–65; the sequence is EQCGSQAGGARCASGLCCSKFGWCGNTNDYCGPGNCQSQCPG. 4 disulfides stabilise this stretch: Cys26–Cys41, Cys35–Cys47, Cys40–Cys54, and Cys59–Cys63. A 4-hydroxyproline mark is found at Pro67 and Pro69. 3 cysteine pairs are disulfide-bonded: Cys96–Cys158, Cys170–Cys178, and Cys277–Cys309. Glu140 (proton donor) is an active-site residue. Residues 318–324 constitute a propeptide, removed in mature form; sequence GLLVDTM.

This sequence belongs to the glycosyl hydrolase 19 family. Chitinase class I subfamily. Post-translationally, the 4-hydroxyproline residues are not glycosylated in this plant vacuolar protein.

Its subcellular location is the vacuole. The catalysed reaction is Random endo-hydrolysis of N-acetyl-beta-D-glucosaminide (1-&gt;4)-beta-linkages in chitin and chitodextrins.. Functionally, defense against chitin-containing fungal pathogens. This is Endochitinase B (CHN50) from Nicotiana tabacum (Common tobacco).